We begin with the raw amino-acid sequence, 362 residues long: E3 ubiquitin-protein ligase TM129 (362 aa).

The Lumenal segment spans residues 1–6; it reads MESPEV. Residues 7–27 traverse the membrane as a helical segment; it reads TFTLAYVVFSVCFVFTPNEFH. Over 28 to 56 the chain is Cytoplasmic; that stretch reads SAGITVQNLLSGWLGSEDVAFVHYHIRRS. The helical transmembrane segment at 57–77 threads the bilayer; sequence TATLLTHSLLPMGYFIGMCFA. Residues 78 to 94 lie on the Lumenal side of the membrane; that stretch reads APEKELYNVYKAADGWK. A helical membrane pass occupies residues 95–115; that stretch reads VFVLITVLLPVTTSILAFYWS. Topologically, residues 116 to 362 are cytoplasmic; the sequence is QKRWGNHPLA…FCIVDVCIVR (247 aa). Residues 285 to 350 form an RING-type; degenerate zinc finger; that stretch reads CIGCMQTNAN…SSHVPCPTCR (66 aa).

The protein belongs to the TMEM129 family. In terms of assembly, integral component of ER-resident dislocation complexes.

Its subcellular location is the endoplasmic reticulum membrane. It carries out the reaction S-ubiquitinyl-[E2 ubiquitin-conjugating enzyme]-L-cysteine + [acceptor protein]-L-lysine = [E2 ubiquitin-conjugating enzyme]-L-cysteine + N(6)-ubiquitinyl-[acceptor protein]-L-lysine.. It functions in the pathway protein modification; protein ubiquitination. Functionally, E3 ubiquitin-protein ligase involved in ER-associated protein degradation, preferentially associates with the E2 enzyme UBE2J2. The chain is E3 ubiquitin-protein ligase TM129 (tmem129) from Xenopus tropicalis (Western clawed frog).